The primary structure comprises 508 residues: GMP synthase [glutamine-hydrolyzing] (508 aa).

Residues methionine 1–threonine 189 enclose the Glutamine amidotransferase type-1 domain. Residue cysteine 78 is the Nucleophile of the active site. Residues histidine 163 and glutamate 165 contribute to the active site. The 194-residue stretch at tryptophan 190–arginine 383 folds into the GMPS ATP-PPase domain. Residue serine 217–threonine 223 coordinates ATP.

In terms of assembly, homodimer.

It catalyses the reaction XMP + L-glutamine + ATP + H2O = GMP + L-glutamate + AMP + diphosphate + 2 H(+). The protein operates within purine metabolism; GMP biosynthesis; GMP from XMP (L-Gln route): step 1/1. In terms of biological role, catalyzes the synthesis of GMP from XMP. This Helicobacter pylori (strain HPAG1) protein is GMP synthase [glutamine-hydrolyzing].